The sequence spans 95 residues: Probable FAD-linked sulfhydryl oxidase OPG072 (95 aa).

Over 1 to 8 (MNPKHWGR) the chain is Intravirion. The 95-residue stretch at 1–95 (MNPKHWGRAV…AIDVTKVNPL (95 aa)) folds into the ERV/ALR sulfhydryl oxidase domain. The chain crosses the membrane as a helical span at residues 9 to 25 (AVWTIIFIVLSQAGLDG). Residues 26–95 (NIEACKRKLY…AIDVTKVNPL (70 aa)) lie on the Virion surface side of the membrane. Cysteine 43 and cysteine 46 form a disulfide bridge.

It belongs to the orthopoxvirus OPG072 family. Interacts with OPG128/A2.5; this interaction involves formation of a transient disulfide-bonded intermediate, allowing disulfide bond transfer. FAD serves as cofactor.

The protein localises to the virion membrane. It is found in the host cytoplasm. The catalysed reaction is 2 R'C(R)SH + O2 = R'C(R)S-S(R)CR' + H2O2. Functionally, FAD-dependent sulfhydryl oxidase that catalyzes disulfide bond formation. The complete pathway for formation of disulfide bonds in intracellular virion membrane proteins sequentially involves thiol-disulfide transfer between OPG072/E10, OPG128/A2.5 and OPG088/G4. The sequence is that of Probable FAD-linked sulfhydryl oxidase OPG072 (OPG072) from Bos taurus (Bovine).